The following is a 115-amino-acid chain: Photosystem II reaction center Psb28 protein (115 aa).

Belongs to the Psb28 family. In terms of assembly, part of the photosystem II complex.

It localises to the plastid. Its subcellular location is the chloroplast thylakoid membrane. This is Photosystem II reaction center Psb28 protein from Trieres chinensis (Marine centric diatom).